We begin with the raw amino-acid sequence, 358 residues long: Gap junction alpha-5 protein (358 aa).

Over 1–19 the chain is Cytoplasmic; the sequence is MGDWSFLGEFLEEVHKHST. A helical transmembrane segment spans residues 20 to 40; sequence VIGKVWLTVLFIFRMLVLGTA. The Extracellular segment spans residues 41-76; it reads AESSWGDEQADFQCDTMQPGCGNVCYDQAFPISHIR. The chain crosses the membrane as a helical span at residues 77 to 97; sequence YWVLQIIFVSTPSLVYMGHAM. At 98 to 164 the chain is on the cytoplasmic side; that stretch reads HTVRMQEKRK…CSILIRTTME (67 aa). The chain crosses the membrane as a helical span at residues 165 to 185; it reads VAFIVGQYLLYGIFLDTLHVC. Residues 186-205 lie on the Extracellular side of the membrane; that stretch reads RRSPCPHPVNCYVSRPTEKN. A helical transmembrane segment spans residues 206-226; sequence VFIVFMLAVAALSLFLSLAEL. Residues 227 to 358 are Cytoplasmic-facing; sequence YHLGWKKLRQ…SKARSDDLSV (132 aa). Residues 318–358 form a disordered region; sequence AQKPEVPNGASPGHRLPHGYQSDKRRLSKASSKARSDDLSV. A phosphoserine mark is found at Ser353 and Ser357.

It belongs to the connexin family. Alpha-type (group II) subfamily. As to quaternary structure, a connexon is composed of a hexamer of connexins.

The protein resides in the cell membrane. It localises to the cell junction. Its subcellular location is the gap junction. Its function is as follows. One gap junction consists of a cluster of closely packed pairs of transmembrane channels, the connexons, through which materials of low MW diffuse from one cell to a neighboring cell. This is Gap junction alpha-5 protein (GJA5) from Canis lupus familiaris (Dog).